Here is a 233-residue protein sequence, read N- to C-terminus: Small ribosomal subunit protein uS2 (233 aa).

Belongs to the universal ribosomal protein uS2 family.

The chain is Small ribosomal subunit protein uS2 from Prochlorococcus marinus (strain MIT 9312).